We begin with the raw amino-acid sequence, 341 residues long: Methionine import ATP-binding protein MetN 2 (341 aa).

Residues 2 to 241 (IELKEVVKEY…PQHTVTKRFV (240 aa)) enclose the ABC transporter domain. 38–45 (GFSGAGKS) serves as a coordination point for ATP.

The protein belongs to the ABC transporter superfamily. Methionine importer (TC 3.A.1.24) family. In terms of assembly, the complex is composed of two ATP-binding proteins (MetN), two transmembrane proteins (MetI) and a solute-binding protein (MetQ).

It localises to the cell membrane. It catalyses the reaction L-methionine(out) + ATP + H2O = L-methionine(in) + ADP + phosphate + H(+). The catalysed reaction is D-methionine(out) + ATP + H2O = D-methionine(in) + ADP + phosphate + H(+). In terms of biological role, part of the ABC transporter complex MetNIQ involved in methionine import. Responsible for energy coupling to the transport system. In Staphylococcus aureus (strain bovine RF122 / ET3-1), this protein is Methionine import ATP-binding protein MetN 2.